Here is a 259-residue protein sequence, read N- to C-terminus: GTP cyclohydrolase FolE2 (259 aa).

The protein belongs to the GTP cyclohydrolase IV family.

The enzyme catalyses GTP + H2O = 7,8-dihydroneopterin 3'-triphosphate + formate + H(+). It participates in cofactor biosynthesis; 7,8-dihydroneopterin triphosphate biosynthesis; 7,8-dihydroneopterin triphosphate from GTP: step 1/1. In terms of biological role, converts GTP to 7,8-dihydroneopterin triphosphate. The polypeptide is GTP cyclohydrolase FolE2 (Halorhodospira halophila (strain DSM 244 / SL1) (Ectothiorhodospira halophila (strain DSM 244 / SL1))).